The following is a 247-amino-acid chain: Adenosylcobinamide-GDP ribazoletransferase (247 aa).

The next 6 helical transmembrane spans lie at 31–51, 55–75, 109–129, 135–155, 183–203, and 227–247; these read ILFYPLVGLIIGGILFLVTCI, LPALLLAAIVLALWIWLTGGL, IGVLSLVIICLLKFALVYVLI, LFLICIPILGRVVPSILFLTT, VLLLPLYWGWQGLIAIIGFLI, and AIEIGETVLMFTFVVSYFYLV.

The protein belongs to the CobS family. Requires Mg(2+) as cofactor.

The protein resides in the cell inner membrane. It carries out the reaction alpha-ribazole + adenosylcob(III)inamide-GDP = adenosylcob(III)alamin + GMP + H(+). The catalysed reaction is alpha-ribazole 5'-phosphate + adenosylcob(III)inamide-GDP = adenosylcob(III)alamin 5'-phosphate + GMP + H(+). It functions in the pathway cofactor biosynthesis; adenosylcobalamin biosynthesis; adenosylcobalamin from cob(II)yrinate a,c-diamide: step 7/7. Its function is as follows. Joins adenosylcobinamide-GDP and alpha-ribazole to generate adenosylcobalamin (Ado-cobalamin). Also synthesizes adenosylcobalamin 5'-phosphate from adenosylcobinamide-GDP and alpha-ribazole 5'-phosphate. This Acinetobacter baumannii (strain ATCC 17978 / DSM 105126 / CIP 53.77 / LMG 1025 / NCDC KC755 / 5377) protein is Adenosylcobinamide-GDP ribazoletransferase.